The primary structure comprises 166 residues: Probable chemoreceptor glutamine deamidase CheD (166 aa).

It belongs to the CheD family.

The catalysed reaction is L-glutaminyl-[protein] + H2O = L-glutamyl-[protein] + NH4(+). In terms of biological role, probably deamidates glutamine residues to glutamate on methyl-accepting chemotaxis receptors (MCPs), playing an important role in chemotaxis. In Desulforamulus reducens (strain ATCC BAA-1160 / DSM 100696 / MI-1) (Desulfotomaculum reducens), this protein is Probable chemoreceptor glutamine deamidase CheD.